The sequence spans 322 residues: DNA repair and recombination protein RadA (322 aa).

Gly105–Thr112 contributes to the ATP binding site.

Belongs to the eukaryotic RecA-like protein family.

Functionally, involved in DNA repair and in homologous recombination. Binds and assemble on single-stranded DNA to form a nucleoprotein filament. Hydrolyzes ATP in a ssDNA-dependent manner and promotes DNA strand exchange between homologous DNA molecules. This chain is DNA repair and recombination protein RadA, found in Methanococcus maripaludis (Methanococcus deltae).